The chain runs to 707 residues: Alpha-hemolysin translocation ATP-binding protein HlyB (707 aa).

Positions 3 to 125 constitute a Peptidase C39 domain; sequence SCHKIDYGLY…ALYQGHIILI (123 aa). His83 is an active-site residue. In terms of domain architecture, ABC transmembrane type-1 spans 154 to 436; sequence FIETLVVSVF…LAQIWQDFQQ (283 aa). 5 consecutive transmembrane segments (helical) span residues 158–178, 191–211, 269–289, 295–315, and 388–408; these read LVVSVFLQLFALITPLFFQVV, LNVITVALSVVVVFEIILSGL, ALTSVLDLLFSFIFFAVMWYY, LVILFSLPCYAAWSVFISPIL, and VMIINLWLGAHLVISGDLSIG. The ABC transporter domain occupies 468–703; the sequence is ITFRNIRFRY…PESLYSYLYQ (236 aa). 502-509 is an ATP binding site; sequence GRSGSGKS.

It belongs to the ABC transporter superfamily. Protein-1 exporter (TC 3.A.1.109) family. In terms of assembly, homodimer.

It localises to the cell inner membrane. Its function is as follows. Part of the ABC transporter complex HlyBD involved in hemolysin export. Transmembrane domains (TMD) form a pore in the inner membrane and the ATP-binding domain (NBD) is responsible for energy generation. This is Alpha-hemolysin translocation ATP-binding protein HlyB (hlyB) from Escherichia coli.